A 279-amino-acid polypeptide reads, in one-letter code: Energy-coupling factor transporter ATP-binding protein EcfA2 (279 aa).

Positions 3 to 245 (ITLKNVSYTY…LDFMESIQLG (243 aa)) constitute an ABC transporter domain. 40–47 (GHTGSGKS) contacts ATP.

Belongs to the ABC transporter superfamily. Energy-coupling factor EcfA family. Forms a stable energy-coupling factor (ECF) transporter complex composed of 2 membrane-embedded substrate-binding proteins (S component), 2 ATP-binding proteins (A component) and 2 transmembrane proteins (T component).

The protein resides in the cell membrane. In terms of biological role, ATP-binding (A) component of a common energy-coupling factor (ECF) ABC-transporter complex. Unlike classic ABC transporters this ECF transporter provides the energy necessary to transport a number of different substrates. The sequence is that of Energy-coupling factor transporter ATP-binding protein EcfA2 from Streptococcus sanguinis (strain SK36).